We begin with the raw amino-acid sequence, 307 residues long: Stage III sporulation protein AA (307 aa).

Residue 143 to 150 participates in ATP binding; it reads GPPQTGKT.

This is Stage III sporulation protein AA (spoIIIAA) from Bacillus subtilis (strain 168).